Reading from the N-terminus, the 413-residue chain is uncharacterized protein (413 aa).

An N6-(pyridoxal phosphate)lysine modification is found at K265.

It belongs to the threonine aldolase family. Requires pyridoxal 5'-phosphate as cofactor.

This is an uncharacterized protein from Caenorhabditis elegans.